A 469-amino-acid chain; its full sequence is MSKQEQSNQIHIVLGLGCSGISAAKLLKTEGKNVLVLENNSNKNLLNISNKLKSEGINVILLDEALHINNFTPWIESVCSITVSPGIDWEHIALKELRGKNINVQGEVALAWERLTHIPSVGITGTNGKTTVTNMLNHILKLNNLNTDMGGNVGKALSKIALENMKNNDQELDWLVLELSSFQIEGSPKVAPTIGIWTTFTPDHLERHNDMESYFKIKRSLLEKSSIRIYNSDDQYLSSKRKELPKGIWVGTNQQSLYSQYQKFWIDQKGYIFEDKKQLFHSSILNIPGKHNLQNLLLAIAAAREIGLDDSSIAKSIKSFKSIPHRLEYLGNVNNLSFYNDSKATNFDSSITALKSVPHPIILLAGGIQKKGDFMPWVKQIKQSTNGIVLFGLSANNLKEELLISSYIGEIIVKKNLEEATIASINIARETNSRSILLSPACASFDQYKNYEERGDHFKNLVKKYKLIK.

125–131 (GTNGKTT) contacts ATP.

The protein belongs to the MurCDEF family.

The protein localises to the cytoplasm. The catalysed reaction is UDP-N-acetyl-alpha-D-muramoyl-L-alanine + D-glutamate + ATP = UDP-N-acetyl-alpha-D-muramoyl-L-alanyl-D-glutamate + ADP + phosphate + H(+). It participates in cell wall biogenesis; peptidoglycan biosynthesis. Its function is as follows. Cell wall formation. Catalyzes the addition of glutamate to the nucleotide precursor UDP-N-acetylmuramoyl-L-alanine (UMA). In Prochlorococcus marinus (strain NATL2A), this protein is UDP-N-acetylmuramoylalanine--D-glutamate ligase.